An 831-amino-acid polypeptide reads, in one-letter code: DNA ligase (831 aa).

Residues 34–38 (DADYD), 83–84 (SL), and Glu-114 contribute to the NAD(+) site. Lys-116 (N6-AMP-lysine intermediate) is an active-site residue. NAD(+)-binding residues include Arg-137, Glu-174, Lys-291, and Lys-315. Residues Cys-409, Cys-412, Cys-427, and Cys-433 each coordinate Zn(2+). Residues 749-831 (AHTAPLNGQS…LAFLEQYSAQ (83 aa)) enclose the BRCT domain.

This sequence belongs to the NAD-dependent DNA ligase family. LigA subfamily. It depends on Mg(2+) as a cofactor. Requires Mn(2+) as cofactor.

The enzyme catalyses NAD(+) + (deoxyribonucleotide)n-3'-hydroxyl + 5'-phospho-(deoxyribonucleotide)m = (deoxyribonucleotide)n+m + AMP + beta-nicotinamide D-nucleotide.. Its function is as follows. DNA ligase that catalyzes the formation of phosphodiester linkages between 5'-phosphoryl and 3'-hydroxyl groups in double-stranded DNA using NAD as a coenzyme and as the energy source for the reaction. It is essential for DNA replication and repair of damaged DNA. The protein is DNA ligase of Xylella fastidiosa (strain M23).